The sequence spans 362 residues: tRNA 2-selenouridine synthase (362 aa).

Residues 14-137 (LANETPIIDV…LRQATIEMTN (124 aa)) form the Rhodanese domain. Residue Cys-97 is the S-selanylcysteine intermediate of the active site.

Belongs to the SelU family. As to quaternary structure, monomer.

It catalyses the reaction 5-methylaminomethyl-2-thiouridine(34) in tRNA + selenophosphate + (2E)-geranyl diphosphate + H2O + H(+) = 5-methylaminomethyl-2-selenouridine(34) in tRNA + (2E)-thiogeraniol + phosphate + diphosphate. The enzyme catalyses 5-methylaminomethyl-2-thiouridine(34) in tRNA + (2E)-geranyl diphosphate = 5-methylaminomethyl-S-(2E)-geranyl-thiouridine(34) in tRNA + diphosphate. The catalysed reaction is 5-methylaminomethyl-S-(2E)-geranyl-thiouridine(34) in tRNA + selenophosphate + H(+) = 5-methylaminomethyl-2-(Se-phospho)selenouridine(34) in tRNA + (2E)-thiogeraniol. It carries out the reaction 5-methylaminomethyl-2-(Se-phospho)selenouridine(34) in tRNA + H2O = 5-methylaminomethyl-2-selenouridine(34) in tRNA + phosphate. Involved in the post-transcriptional modification of the uridine at the wobble position (U34) of tRNA(Lys), tRNA(Glu) and tRNA(Gln). Catalyzes the conversion of 2-thiouridine (S2U-RNA) to 2-selenouridine (Se2U-RNA). Acts in a two-step process involving geranylation of 2-thiouridine (S2U) to S-geranyl-2-thiouridine (geS2U) and subsequent selenation of the latter derivative to 2-selenouridine (Se2U) in the tRNA chain. The sequence is that of tRNA 2-selenouridine synthase from Proteus mirabilis (strain HI4320).